Consider the following 190-residue polypeptide: Xanthine phosphoribosyltransferase (190 aa).

The xanthine site is built by leucine 20 and asparagine 27. 128-132 contributes to the 5-phospho-alpha-D-ribose 1-diphosphate binding site; it reads ANGKA. Lysine 156 lines the xanthine pocket.

It belongs to the purine/pyrimidine phosphoribosyltransferase family. Xpt subfamily. In terms of assembly, homodimer.

It is found in the cytoplasm. It carries out the reaction XMP + diphosphate = xanthine + 5-phospho-alpha-D-ribose 1-diphosphate. It functions in the pathway purine metabolism; XMP biosynthesis via salvage pathway; XMP from xanthine: step 1/1. Its function is as follows. Converts the preformed base xanthine, a product of nucleic acid breakdown, to xanthosine 5'-monophosphate (XMP), so it can be reused for RNA or DNA synthesis. The sequence is that of Xanthine phosphoribosyltransferase from Stutzerimonas stutzeri (strain A1501) (Pseudomonas stutzeri).